The chain runs to 217 residues: Lipoprotein CseA (217 aa).

Residues 1-34 form the signal peptide; the sequence is MRGLGTESLRARGALKAAIAAVAGLAVLGLSVSA. A lipid anchor (N-palmitoyl cysteine) is attached at Cys35. Cys35 carries the S-diacylglycerol cysteine lipid modification. Disordered stretches follow at residues 39 to 66 and 192 to 217; these read GTGA…SPSK and FSEE…PAPN.

It is found in the cell membrane. Functionally, may be involved in the stabilization of the cell envelope or may interact with the sensor protein CseC to modulate its activity, in response to cell envelope stress. The sequence is that of Lipoprotein CseA (cseA) from Streptomyces avermitilis (strain ATCC 31267 / DSM 46492 / JCM 5070 / NBRC 14893 / NCIMB 12804 / NRRL 8165 / MA-4680).